The chain runs to 195 residues: Pyruvoyl-dependent arginine decarboxylase AaxB (195 aa).

Ser53 carries the post-translational modification Pyruvic acid (Ser).

It belongs to the pyruvoyl-dependent arginine decarboxylase family. Trimer of an alpha-beta dimer. Pyruvate is required as a cofactor.

It localises to the cytoplasm. It catalyses the reaction L-arginine + H(+) = agmatine + CO2. With respect to regulation, inhibited by argininamide. Functionally, part of the AaxABC system, catalyzes the decarboxylation of L-arginine. The arginine uptake by the bacterium in the macrophage may be a virulence factor against the host innate immune response. This Chlamydia pneumoniae (Chlamydophila pneumoniae) protein is Pyruvoyl-dependent arginine decarboxylase AaxB (aaxB).